Here is a 131-residue protein sequence, read N- to C-terminus: Cystatin-like cysteine protease inhibitor EPIC3 (131 aa).

The N-terminal stretch at 1–22 (MAFTRSIALFAGLALAASSAQG) is a signal peptide. Asn33 carries N-linked (GlcNAc...) asparagine glycosylation. The Secondary area of contact motif lies at 71-75 (QTVAG).

The protein belongs to the cystatin family.

The protein localises to the secreted. Secreted effector that interacts with and inhibits host apoplastic pathogenesis-related papain-like cysteine proteases. Inhibition of host proteases by a pathogen extracellular protease inhibitor forms a specific type of defense-counterdefense mechanism between plants and microbial pathogens. The polypeptide is Cystatin-like cysteine protease inhibitor EPIC3 (Phytophthora infestans (strain T30-4) (Potato late blight agent)).